The sequence spans 435 residues: Ribosomal protein uS12 methylthiotransferase RimO (435 aa).

The 111-residue stretch at 3 to 113 folds into the MTTase N-terminal domain; that stretch reads HKVGFVSLGC…VVNAVHQHLP (111 aa). [4Fe-4S] cluster contacts are provided by Cys-12, Cys-48, Cys-77, Cys-144, Cys-148, and Cys-151. A Radical SAM core domain is found at 130-367; that stretch reads LTPRHYAYLK…MQVQAEISRN (238 aa). Residues 370 to 435 form the TRAM domain; that stretch reads KNKIGSTQTV…DDYDLYASLV (66 aa).

This sequence belongs to the methylthiotransferase family. RimO subfamily. [4Fe-4S] cluster serves as cofactor.

It localises to the cytoplasm. It carries out the reaction L-aspartate(89)-[ribosomal protein uS12]-hydrogen + (sulfur carrier)-SH + AH2 + 2 S-adenosyl-L-methionine = 3-methylsulfanyl-L-aspartate(89)-[ribosomal protein uS12]-hydrogen + (sulfur carrier)-H + 5'-deoxyadenosine + L-methionine + A + S-adenosyl-L-homocysteine + 2 H(+). Catalyzes the methylthiolation of an aspartic acid residue of ribosomal protein uS12. The sequence is that of Ribosomal protein uS12 methylthiotransferase RimO from Legionella pneumophila (strain Lens).